The primary structure comprises 537 residues: Mitochondria-eating protein (537 aa).

Residues 1-270 (MAESLKKLAK…SHSRSRSHSR (270 aa)) form an interaction with YWHAG/14-3-3 protein gamma region. 6 positions are modified to phosphoserine: serine 13, serine 85, serine 123, serine 127, serine 154, and serine 157. The segment at 109–150 (SKNRDNSPDQDQHQSDNESFSETQPTQVQDDLAESGKSLEGA) is disordered. Positions 110–124 (KNRDNSPDQDQHQSD) are enriched in basic and acidic residues. A compositionally biased stretch (polar residues) spans 125–137 (NESFSETQPTQVQ). Coiled-coil stretches lie at residues 152-184 (NGSTISLLAAEEEINQLKKQLKSLQAQEDARHK) and 210-243 (QDVVSNYEKHLQNLKEEIAVLSAEKSGLQGRSAR). 2 disordered regions span residues 171 to 212 (QLKS…PQDV) and 233 to 291 (EKSG…RAKM). A compositionally biased stretch (basic and acidic residues) spans 179–209 (EDARHKTSENRRSEALKSDHRSTKRTQDQRP). A compositionally biased stretch (low complexity) spans 239-251 (GRSARSPSPSTGT). Over residues 252 to 269 (RSHRRGRSRSHSRSRSHS) the composition is skewed to basic residues. Serine 283, serine 285, and serine 508 each carry phosphoserine.

Belongs to the MIEAP family. In terms of assembly, interacts (via coiled-coil domains) with BNIP3L (via BH3 domain). Interacts (via coiled-coil domains) with BNIP3 (via BH3 domain). Interacts with YWHAG/14-3-3 protein gamma; a protein that also plays a role in MALM. In terms of tissue distribution, in testis, expressed primarily in spermatids.

The protein resides in the cytoplasm. It localises to the cytosol. It is found in the mitochondrion outer membrane. The protein localises to the mitochondrion matrix. Functionally, key regulator of mitochondrial quality that mediates the repairing or degradation of unhealthy mitochondria in response to mitochondrial damage. Mediator of mitochondrial protein catabolic process (also named MALM) by mediating the degradation of damaged proteins inside mitochondria by promoting the accumulation in the mitochondrial matrix of hydrolases that are characteristic of the lysosomal lumen. Also involved in mitochondrion degradation of damaged mitochondria by promoting the formation of vacuole-like structures (named MIV), which engulf and degrade unhealthy mitochondria by accumulating lysosomes. The physical interaction of SPATA18/MIEAP, BNIP3 and BNIP3L/NIX at the mitochondrial outer membrane regulates the opening of a pore in the mitochondrial double membrane in order to mediate the translocation of lysosomal proteins from the cytoplasm to the mitochondrial matrix. Binds cardiolipin. May form molecular condensates (non-membrane-bounded organelles) within mitochondria that compartmentalize and promote cardiolipin metabolism. This Mus musculus (Mouse) protein is Mitochondria-eating protein (Spata18).